Consider the following 329-residue polypeptide: MNNFKLIVRKWYIPVLIISLITLVASAYALYWATIPETKETQISIRHYSALAYFSGGAEVKKDNPIWANGSFVTLPVYSYSLTPEYSGEFYFTTAPRGDITIETEAKIVYFYEVSDAPVWEKVYYAASNTSRGEIKTNFKINVTDLKSKINEAQNSFGVYLGKTGARIDVSVHYYGKITGKDVDETLSFKIPIDVQSTYYSFSTLNETRDFEMPSTRVVEVQKPLHMKVIPAALCTVSIIFAGLSVVYRTKYSDVSSLEREIERVSWEKKLKEVSFARMPETNLEMVEVERFEDISKAAEETFEHLFYDREKGVFFFIHGGVLYYCREK.

The next 2 membrane-spanning stretches (helical) occupy residues 13–35 (IPVL…WATI) and 229–248 (VIPA…SVVY).

It localises to the cell membrane. This is an uncharacterized protein from Archaeoglobus fulgidus (strain ATCC 49558 / DSM 4304 / JCM 9628 / NBRC 100126 / VC-16).